A 505-amino-acid polypeptide reads, in one-letter code: MKKKLVLIIIDGLGLRLESQGNGFALAKTPVFDRLFQEYPNSLIAASGQEVGLPEGQMGNSEVGHLNIGAGFVVYTGISIINNALKTGKFFENEKFILAFRHSIKTGFPLQIMGLFSPGGVHSHQDHLFALIDFAANFGVKKLNLHLFGDGRDVGPKSIKPWIKMLNLKLKNYENYKIASISGRFYSMDRDKMFDRVELGYNALLGKAENTFTDPIDYINFQYEKGVSDEFFEPAINLKVNKKDFLADDHPVIFFNFRPDRARQLSHLILQTDLYEQKPKNPIKTDVFVSMMKYEGINCLVAFEEMRVENPLGKLISMAGFRQLRLAETQKYAHVTFFVDGGVELELENSDRILIDSLKVQSYADFPQMSAVEITDKLLEVGQNYDFIIMNFANPDMVGHTGDLKATIKAVEILDFQIGRICKWAEEKNFDFFITADHGNAELTEDENGNPSTKHTTFPVMLISSDKTIKLKSGKLANIAPTILDYLGLDKHPDMDHDSLIIKDK.

Positions 11 and 61 each coordinate Mn(2+). Serine 61 acts as the Phosphoserine intermediate in catalysis. Substrate contacts are provided by residues histidine 122, 152 to 153 (RD), arginine 184, arginine 190, 258 to 261 (RPDR), and lysine 331. Positions 396, 400, 437, 438, and 455 each coordinate Mn(2+).

It belongs to the BPG-independent phosphoglycerate mutase family. In terms of assembly, monomer. Mn(2+) is required as a cofactor.

It carries out the reaction (2R)-2-phosphoglycerate = (2R)-3-phosphoglycerate. It functions in the pathway carbohydrate degradation; glycolysis; pyruvate from D-glyceraldehyde 3-phosphate: step 3/5. In terms of biological role, catalyzes the interconversion of 2-phosphoglycerate and 3-phosphoglycerate. This Mesomycoplasma hyopneumoniae (strain 7448) (Mycoplasma hyopneumoniae) protein is 2,3-bisphosphoglycerate-independent phosphoglycerate mutase.